The primary structure comprises 352 residues: Glycerol-1-phosphate dehydrogenase [NAD(P)+] (352 aa).

Residues 99–103 and 121–124 contribute to the NAD(+) site; these read GTKID and TSPS. Residue Asp-126 coordinates substrate. Ser-130 provides a ligand contact to NAD(+). Asp-173 serves as a coordination point for substrate. The Zn(2+) site is built by Asp-173 and His-253. Residue His-257 participates in substrate binding. A Zn(2+)-binding site is contributed by His-269.

Belongs to the glycerol-1-phosphate dehydrogenase family. Zn(2+) serves as cofactor.

Its subcellular location is the cytoplasm. The catalysed reaction is sn-glycerol 1-phosphate + NAD(+) = dihydroxyacetone phosphate + NADH + H(+). The enzyme catalyses sn-glycerol 1-phosphate + NADP(+) = dihydroxyacetone phosphate + NADPH + H(+). The protein operates within membrane lipid metabolism; glycerophospholipid metabolism. Functionally, catalyzes the NAD(P)H-dependent reduction of dihydroxyacetonephosphate (DHAP or glycerone phosphate) to glycerol 1-phosphate (G1P). The G1P thus generated is used as the glycerophosphate backbone of phospholipids in the cellular membranes of Archaea. The sequence is that of Glycerol-1-phosphate dehydrogenase [NAD(P)+] from Thermoplasma volcanium (strain ATCC 51530 / DSM 4299 / JCM 9571 / NBRC 15438 / GSS1).